Consider the following 355-residue polypeptide: Small ribosomal subunit protein uS2 (355 aa).

Belongs to the universal ribosomal protein uS2 family.

The sequence is that of Small ribosomal subunit protein uS2 from Methylorubrum extorquens (strain CM4 / NCIMB 13688) (Methylobacterium extorquens).